The sequence spans 196 residues: ATP-dependent Clp protease proteolytic subunit (196 aa).

Serine 101 acts as the Nucleophile in catalysis. The active site involves histidine 126.

It belongs to the peptidase S14 family. Component of the chloroplastic Clp protease core complex.

It is found in the plastid. Its subcellular location is the chloroplast stroma. The enzyme catalyses Hydrolysis of proteins to small peptides in the presence of ATP and magnesium. alpha-casein is the usual test substrate. In the absence of ATP, only oligopeptides shorter than five residues are hydrolyzed (such as succinyl-Leu-Tyr-|-NHMec, and Leu-Tyr-Leu-|-Tyr-Trp, in which cleavage of the -Tyr-|-Leu- and -Tyr-|-Trp bonds also occurs).. Its function is as follows. Cleaves peptides in various proteins in a process that requires ATP hydrolysis. Has a chymotrypsin-like activity. Plays a major role in the degradation of misfolded proteins. The sequence is that of ATP-dependent Clp protease proteolytic subunit from Arabis hirsuta (Hairy rock-cress).